Consider the following 75-residue polypeptide: Small ribosomal subunit protein bS18 (75 aa).

Belongs to the bacterial ribosomal protein bS18 family. Part of the 30S ribosomal subunit. Forms a tight heterodimer with protein bS6.

Functionally, binds as a heterodimer with protein bS6 to the central domain of the 16S rRNA, where it helps stabilize the platform of the 30S subunit. This chain is Small ribosomal subunit protein bS18, found in Laribacter hongkongensis (strain HLHK9).